The sequence spans 352 residues: Chorismate synthase (352 aa).

NADP(+)-binding residues include Arg-48 and Arg-54. FMN contacts are provided by residues 125–127, 238–239, Ala-278, 293–297, and Arg-319; these read RAS, NA, and KPASS.

Belongs to the chorismate synthase family. In terms of assembly, homotetramer. It depends on FMNH2 as a cofactor.

The enzyme catalyses 5-O-(1-carboxyvinyl)-3-phosphoshikimate = chorismate + phosphate. Its pathway is metabolic intermediate biosynthesis; chorismate biosynthesis; chorismate from D-erythrose 4-phosphate and phosphoenolpyruvate: step 7/7. Catalyzes the anti-1,4-elimination of the C-3 phosphate and the C-6 proR hydrogen from 5-enolpyruvylshikimate-3-phosphate (EPSP) to yield chorismate, which is the branch point compound that serves as the starting substrate for the three terminal pathways of aromatic amino acid biosynthesis. This reaction introduces a second double bond into the aromatic ring system. This Coxiella burnetii (strain RSA 493 / Nine Mile phase I) protein is Chorismate synthase.